Consider the following 156-residue polypeptide: Mitochondrial translation release factor in rescue (156 aa).

The interval 44-108 is GGQ domain; sequence EEELEEQFVR…LREKLEVAYK (65 aa). Residues 58–60 carry the GGQ motif; that stretch reads GGQ. The stretch at 100–141 forms a coiled coil; that stretch reads REKLEVAYKGEESELLKMKKESMQKKQDKRRKVNENIEKKRR. 2 stretches are compositionally biased toward basic and acidic residues: residues 114 to 125 and 132 to 156; these read LLKMKKESMQKK and VNEN…DKST. A disordered region spans residues 114–156; sequence LLKMKKESMQKKQDKRRKVNENIEKKRRFKEMLNSKQEDDKST.

The protein belongs to the prokaryotic/mitochondrial release factor family. Interacts (via C-terminus) with MTRES1 (via S4 domain). Associates with mitoribosomal S39 large subunit, peptidyl tRNA and nascent chain.

It is found in the mitochondrion. In terms of biological role, part of a mitoribosome-associated quality control pathway that prevents aberrant translation by responding to interruptions during elongation. As heterodimer with MTRES1, ejects the unfinished nascent chain and peptidyl transfer RNA (tRNA), respectively, from stalled ribosomes. Recruitment of mitoribosome biogenesis factors to these quality control intermediates suggests additional roles for MTRES1 and MTRF during mitoribosome rescue. The chain is Mitochondrial translation release factor in rescue (mtrfr) from Danio rerio (Zebrafish).